The chain runs to 331 residues: Probable inactive O-methyltransferase 11 (331 aa).

S-adenosyl-L-methionine contacts are provided by residues Gly-179, Asp-202, 224-226, Asp-225, Phe-226, and Lys-239; that span reads GDF.

It belongs to the class I-like SAM-binding methyltransferase superfamily. Cation-independent O-methyltransferase family. COMT subfamily.

The chain is Probable inactive O-methyltransferase 11 (omt11) from Dictyostelium discoideum (Social amoeba).